Here is a 190-residue protein sequence, read N- to C-terminus: Elongation factor P (190 aa).

This sequence belongs to the elongation factor P family.

The protein resides in the cytoplasm. Its pathway is protein biosynthesis; polypeptide chain elongation. Involved in peptide bond synthesis. Stimulates efficient translation and peptide-bond synthesis on native or reconstituted 70S ribosomes in vitro. Probably functions indirectly by altering the affinity of the ribosome for aminoacyl-tRNA, thus increasing their reactivity as acceptors for peptidyl transferase. The protein is Elongation factor P of Pseudomonas fluorescens (strain SBW25).